The sequence spans 365 residues: DNA replication and repair protein RecF (365 aa).

Gly30–Thr37 contributes to the ATP binding site.

The protein belongs to the RecF family.

It localises to the cytoplasm. The RecF protein is involved in DNA metabolism; it is required for DNA replication and normal SOS inducibility. RecF binds preferentially to single-stranded, linear DNA. It also seems to bind ATP. The chain is DNA replication and repair protein RecF from Alkaliphilus oremlandii (strain OhILAs) (Clostridium oremlandii (strain OhILAs)).